A 619-amino-acid chain; its full sequence is DNA mismatch repair protein MutL (619 aa).

The tract at residues 339–400 (AEKDDPPAPR…GGASWPHAQP (62 aa)) is disordered.

It belongs to the DNA mismatch repair MutL/HexB family.

In terms of biological role, this protein is involved in the repair of mismatches in DNA. It is required for dam-dependent methyl-directed DNA mismatch repair. May act as a 'molecular matchmaker', a protein that promotes the formation of a stable complex between two or more DNA-binding proteins in an ATP-dependent manner without itself being part of a final effector complex. In Klebsiella pneumoniae subsp. pneumoniae (strain ATCC 700721 / MGH 78578), this protein is DNA mismatch repair protein MutL.